The chain runs to 464 residues: Probable 1,4-beta-D-glucan cellobiohydrolase C (464 aa).

Residues 1 to 19 form the signal peptide; that stretch reads MKNFAPSLALSLLLPTVQA. The CBM1 domain occupies 20-55; it reads QQTMWGQCGGAGWSGATDCVAGGVCSTQNAYYAQCL. 2 cysteine pairs are disulfide-bonded: cysteine 27–cysteine 44 and cysteine 38–cysteine 54. The thr-rich linker stretch occupies residues 59–102; the sequence is TTATTLSTTSKGTTTTTTSSTTSTGGGSSSTTTKTSTSAGPTVT. Residues 65-100 are compositionally biased toward low complexity; sequence STTSKGTTTTTTSSTTSTGGGSSSTTTKTSTSAGPT. The interval 65-108 is disordered; the sequence is STTSKGTTTTTTSSTTSTGGGSSSTTTKTSTSAGPTVTGSPSGN. Residues 103 to 464 form a catalytic region; the sequence is GSPSGNPFSG…QLLTNANPAF (362 aa). Aspartate 194 is an active-site residue. 2 cysteine pairs are disulfide-bonded: cysteine 195/cysteine 254 and cysteine 386/cysteine 433. Aspartate 240 acts as the Proton donor in catalysis. The Nucleophile role is filled by aspartate 419.

It belongs to the glycosyl hydrolase 6 (cellulase B) family.

The protein resides in the secreted. It catalyses the reaction Hydrolysis of (1-&gt;4)-beta-D-glucosidic linkages in cellulose and cellotetraose, releasing cellobiose from the non-reducing ends of the chains.. The biological conversion of cellulose to glucose generally requires three types of hydrolytic enzymes: (1) Endoglucanases which cut internal beta-1,4-glucosidic bonds; (2) Exocellobiohydrolases that cut the disaccharide cellobiose from the non-reducing end of the cellulose polymer chain; (3) Beta-1,4-glucosidases which hydrolyze the cellobiose and other short cello-oligosaccharides to glucose. In Aspergillus clavatus (strain ATCC 1007 / CBS 513.65 / DSM 816 / NCTC 3887 / NRRL 1 / QM 1276 / 107), this protein is Probable 1,4-beta-D-glucan cellobiohydrolase C (cbhC).